Reading from the N-terminus, the 1025-residue chain is Leucyl-cystinyl aminopeptidase (1025 aa).

An N-acetylmethionine modification is found at Met-1. Over Met-1 to Arg-109 the chain is Cytoplasmic. The Dileucine internalization motif signature appears at Leu-53–Leu-54. Tyr-70 is modified (phosphotyrosine). The Dileucine internalization motif motif lies at Leu-76 to Leu-77. Residues Ser-80 and Ser-91 each carry the phosphoserine modification. The tankyrase binding stretch occupies residues Arg-96–Gly-101. Residues Thr-110 to Leu-131 traverse the membrane as a helical; Signal-anchor for type II membrane protein segment. Residues Pro-132–Leu-1025 lie on the Extracellular side of the membrane. N-linked (GlcNAc...) asparagine glycosylation is found at Asn-145, Asn-184, Asn-215, Asn-256, and Asn-266. Glu-295 contacts substrate. Asn-368 and Asn-374 each carry an N-linked (GlcNAc...) asparagine glycan. Position 428-432 (Gly-428–Asn-432) interacts with substrate. An N-linked (GlcNAc...) asparagine glycan is attached at Asn-447. His-464 contributes to the Zn(2+) binding site. The Proton acceptor role is filled by Glu-465. 2 residues coordinate Zn(2+): His-468 and Glu-487. N-linked (GlcNAc...) asparagine glycosylation is found at Asn-525, Asn-578, Asn-664, Asn-682, Asn-695, Asn-758, Asn-834, Asn-850, and Asn-989.

Belongs to the peptidase M1 family. Homodimer. Binds tankyrases 1 and 2. Zn(2+) serves as cofactor.

It localises to the cell membrane. The protein resides in the endomembrane system. It carries out the reaction Release of an N-terminal amino acid, Cys-|-Xaa-, in which the half-cystine residue is involved in a disulfide loop, notably in oxytocin or vasopressin. Hydrolysis rates on a range of aminoacyl arylamides exceed that for the cystinyl derivative, however.. Functionally, release of an N-terminal amino acid, cleave before cysteine, leucine as well as other amino acids. Degrades peptide hormones such as oxytocin, vasopressin and angiotensin III, and plays a role in maintaining homeostasis during pregnancy. May be involved in the inactivation of neuronal peptides in the brain. Cleaves Met-enkephalin and dynorphin. Binds angiotensin IV and may be the angiotensin IV receptor in the brain. The protein is Leucyl-cystinyl aminopeptidase (Lnpep) of Mus musculus (Mouse).